The chain runs to 483 residues: Aspartyl/glutamyl-tRNA(Asn/Gln) amidotransferase subunit B (483 aa).

Belongs to the GatB/GatE family. GatB subfamily. Heterotrimer of A, B and C subunits.

It catalyses the reaction L-glutamyl-tRNA(Gln) + L-glutamine + ATP + H2O = L-glutaminyl-tRNA(Gln) + L-glutamate + ADP + phosphate + H(+). The catalysed reaction is L-aspartyl-tRNA(Asn) + L-glutamine + ATP + H2O = L-asparaginyl-tRNA(Asn) + L-glutamate + ADP + phosphate + 2 H(+). Allows the formation of correctly charged Asn-tRNA(Asn) or Gln-tRNA(Gln) through the transamidation of misacylated Asp-tRNA(Asn) or Glu-tRNA(Gln) in organisms which lack either or both of asparaginyl-tRNA or glutaminyl-tRNA synthetases. The reaction takes place in the presence of glutamine and ATP through an activated phospho-Asp-tRNA(Asn) or phospho-Glu-tRNA(Gln). This chain is Aspartyl/glutamyl-tRNA(Asn/Gln) amidotransferase subunit B, found in Anaplasma phagocytophilum (strain HZ).